The sequence spans 335 residues: Deoxyhypusine hydroxylase (335 aa).

HEAT-like PBS-type repeat units lie at residues 71–97 (LKHELAYCLGQTRNPESVPYLQEVVKD), 104–130 (CRHEAAEALGALGYEDSLEILKVLRDN), 200–233 (QRYRAMFALRDLASPPDLPTATHAVEALAKGLKD), 238–264 (FRHEIAFVFGQLSHPASIPSLTEALSD), and 271–298 (VRHEAAEALGSLGDCEGVEDTLKKFLND). 4 residues coordinate Fe cation: histidine 73, glutamate 74, histidine 106, and glutamate 107. The Fe cation site is built by histidine 240, glutamate 241, histidine 273, and glutamate 274.

This sequence belongs to the deoxyhypusine hydroxylase family. The cofactor is Fe(2+).

It localises to the cytoplasm. The protein localises to the nucleus. The enzyme catalyses [eIF5A protein]-deoxyhypusine + AH2 + O2 = [eIF5A protein]-hypusine + A + H2O. Its pathway is protein modification; eIF5A hypusination. In terms of biological role, catalyzes the hydroxylation of the N(6)-(4-aminobutyl)-L-lysine intermediate to form hypusine, an essential post-translational modification only found in mature eIF-5A factor. This Aspergillus clavatus (strain ATCC 1007 / CBS 513.65 / DSM 816 / NCTC 3887 / NRRL 1 / QM 1276 / 107) protein is Deoxyhypusine hydroxylase (lia1).